Reading from the N-terminus, the 355-residue chain is Holliday junction branch migration complex subunit RuvB (355 aa).

Residues 4 to 190 (TDKLAAERII…FGIVARLEFY (187 aa)) form a large ATPase domain (RuvB-L) region. ATP-binding positions include L29, R30, G71, K74, T75, T76, 137-139 (EDY), R180, Y190, and R227. T75 contacts Mg(2+). The small ATPAse domain (RuvB-S) stretch occupies residues 191-261 (NAEQLARIVT…VADAALKMLD (71 aa)). The interval 264–355 (AVGFDLMDRK…LPGLWDSAAT (92 aa)) is head domain (RuvB-H). Positions 300, 319, and 324 each coordinate DNA.

It belongs to the RuvB family. In terms of assembly, homohexamer. Forms an RuvA(8)-RuvB(12)-Holliday junction (HJ) complex. HJ DNA is sandwiched between 2 RuvA tetramers; dsDNA enters through RuvA and exits via RuvB. An RuvB hexamer assembles on each DNA strand where it exits the tetramer. Each RuvB hexamer is contacted by two RuvA subunits (via domain III) on 2 adjacent RuvB subunits; this complex drives branch migration. In the full resolvosome a probable DNA-RuvA(4)-RuvB(12)-RuvC(2) complex forms which resolves the HJ.

The protein localises to the cytoplasm. The enzyme catalyses ATP + H2O = ADP + phosphate + H(+). The RuvA-RuvB-RuvC complex processes Holliday junction (HJ) DNA during genetic recombination and DNA repair, while the RuvA-RuvB complex plays an important role in the rescue of blocked DNA replication forks via replication fork reversal (RFR). RuvA specifically binds to HJ cruciform DNA, conferring on it an open structure. The RuvB hexamer acts as an ATP-dependent pump, pulling dsDNA into and through the RuvAB complex. RuvB forms 2 homohexamers on either side of HJ DNA bound by 1 or 2 RuvA tetramers; 4 subunits per hexamer contact DNA at a time. Coordinated motions by a converter formed by DNA-disengaged RuvB subunits stimulates ATP hydrolysis and nucleotide exchange. Immobilization of the converter enables RuvB to convert the ATP-contained energy into a lever motion, pulling 2 nucleotides of DNA out of the RuvA tetramer per ATP hydrolyzed, thus driving DNA branch migration. The RuvB motors rotate together with the DNA substrate, which together with the progressing nucleotide cycle form the mechanistic basis for DNA recombination by continuous HJ branch migration. Branch migration allows RuvC to scan DNA until it finds its consensus sequence, where it cleaves and resolves cruciform DNA. The chain is Holliday junction branch migration complex subunit RuvB from Paraburkholderia xenovorans (strain LB400).